The following is a 360-amino-acid chain: NAD(P)H-quinone oxidoreductase subunit 1, chloroplastic (360 aa).

8 helical membrane passes run I27–I47, F98–F118, I129–G149, A165–L185, F203–L223, F253–V273, I297–V317, and F340–L360.

This sequence belongs to the complex I subunit 1 family. As to quaternary structure, NDH is composed of at least 16 different subunits, 5 of which are encoded in the nucleus.

It localises to the plastid. The protein localises to the chloroplast thylakoid membrane. It catalyses the reaction a plastoquinone + NADH + (n+1) H(+)(in) = a plastoquinol + NAD(+) + n H(+)(out). The catalysed reaction is a plastoquinone + NADPH + (n+1) H(+)(in) = a plastoquinol + NADP(+) + n H(+)(out). Its function is as follows. NDH shuttles electrons from NAD(P)H:plastoquinone, via FMN and iron-sulfur (Fe-S) centers, to quinones in the photosynthetic chain and possibly in a chloroplast respiratory chain. The immediate electron acceptor for the enzyme in this species is believed to be plastoquinone. Couples the redox reaction to proton translocation, and thus conserves the redox energy in a proton gradient. This chain is NAD(P)H-quinone oxidoreductase subunit 1, chloroplastic, found in Arabidopsis thaliana (Mouse-ear cress).